The sequence spans 516 residues: Glutamyl-tRNA(Gln) amidotransferase subunit B, mitochondrial (516 aa).

Belongs to the GatB/GatE family. GatB subfamily. In terms of assembly, subunit of the heterotrimeric GatCAB amidotransferase (AdT) complex, composed of A, B and C subunits.

It is found in the mitochondrion. It catalyses the reaction L-glutamyl-tRNA(Gln) + L-glutamine + ATP + H2O = L-glutaminyl-tRNA(Gln) + L-glutamate + ADP + phosphate + H(+). Allows the formation of correctly charged Gln-tRNA(Gln) through the transamidation of misacylated Glu-tRNA(Gln) in the mitochondria. The reaction takes place in the presence of glutamine and ATP through an activated gamma-phospho-Glu-tRNA(Gln). In Drosophila melanogaster (Fruit fly), this protein is Glutamyl-tRNA(Gln) amidotransferase subunit B, mitochondrial.